A 389-amino-acid polypeptide reads, in one-letter code: Chalcone synthase 1 (389 aa).

Cysteine 164 is a catalytic residue.

Belongs to the thiolase-like superfamily. Chalcone/stilbene synthases family.

The catalysed reaction is (E)-4-coumaroyl-CoA + 3 malonyl-CoA + 3 H(+) = 2',4,4',6'-tetrahydroxychalcone + 3 CO2 + 4 CoA. The protein operates within secondary metabolite biosynthesis; flavonoid biosynthesis. In terms of biological role, the primary product of this enzyme is 4,2',4',6'-tetrahydroxychalcone (also termed naringenin-chalcone or chalcone) which can under specific conditions spontaneously isomerize into naringenin. This Solanum lycopersicum (Tomato) protein is Chalcone synthase 1 (CHS1).